Reading from the N-terminus, the 373-residue chain is Beta sliding clamp (373 aa).

This sequence belongs to the beta sliding clamp family. As to quaternary structure, forms a ring-shaped head-to-tail homodimer around DNA which binds and tethers DNA polymerases and other proteins to the DNA. The DNA replisome complex has a single clamp-loading complex (3 tau and 1 each of delta, delta', psi and chi subunits) which binds 3 Pol III cores (1 core on the leading strand and 2 on the lagging strand) each with a beta sliding clamp dimer. Additional proteins in the replisome are other copies of gamma, psi and chi, Ssb, DNA helicase and RNA primase.

The protein localises to the cytoplasm. Its function is as follows. Confers DNA tethering and processivity to DNA polymerases and other proteins. Acts as a clamp, forming a ring around DNA (a reaction catalyzed by the clamp-loading complex) which diffuses in an ATP-independent manner freely and bidirectionally along dsDNA. Initially characterized for its ability to contact the catalytic subunit of DNA polymerase III (Pol III), a complex, multichain enzyme responsible for most of the replicative synthesis in bacteria; Pol III exhibits 3'-5' exonuclease proofreading activity. The beta chain is required for initiation of replication as well as for processivity of DNA replication. The chain is Beta sliding clamp (dnaN) from Mycoplasmopsis pulmonis (strain UAB CTIP) (Mycoplasma pulmonis).